Reading from the N-terminus, the 137-residue chain is Large ribosomal subunit protein uL16 (137 aa).

The protein belongs to the universal ribosomal protein uL16 family. Part of the 50S ribosomal subunit.

In terms of biological role, binds 23S rRNA and is also seen to make contacts with the A and possibly P site tRNAs. The chain is Large ribosomal subunit protein uL16 from Methylorubrum extorquens (strain CM4 / NCIMB 13688) (Methylobacterium extorquens).